Consider the following 293-residue polypeptide: MAKFRLETSAERNGRNSVEGVERTVFFISDGTAITAEVLGHAVLSQFPIKITSYTLPFVASETRAEEIKQQINQIYQDTRIRPLVFYSIISSGVKNIITSSEGFCQDIVQTLVAPLQQETGLEPKPELNRTHGLTEKNLSQYDARIAAIDYALAHDDGISLRNLDQAQVILLGVSRCGKTPTSLYLAMQFGIQAANYPFTADDMDNLQLPATLKQFQHKLFGLTISPERLAAIREERRENSRYASLRQCRIEISEVEALFRKNKINYLNTTNYSVEEISTKIIDMMKLNRRMF.

173 to 180 (GVSRCGKT) lines the ADP pocket.

The protein belongs to the pyruvate, phosphate/water dikinase regulatory protein family. PSRP subfamily.

It carries out the reaction [pyruvate, water dikinase] + ADP = [pyruvate, water dikinase]-phosphate + AMP + H(+). The enzyme catalyses [pyruvate, water dikinase]-phosphate + phosphate + H(+) = [pyruvate, water dikinase] + diphosphate. Its function is as follows. Bifunctional serine/threonine kinase and phosphorylase involved in the regulation of the phosphoenolpyruvate synthase (PEPS) by catalyzing its phosphorylation/dephosphorylation. The chain is Putative phosphoenolpyruvate synthase regulatory protein from Photorhabdus laumondii subsp. laumondii (strain DSM 15139 / CIP 105565 / TT01) (Photorhabdus luminescens subsp. laumondii).